Here is a 200-residue protein sequence, read N- to C-terminus: Transcription elongation factor A protein-like 5 (200 aa).

Basic and acidic residues-rich tracts occupy residues 1 to 49 (MEKF…KLEV), 61 to 85 (GEGK…KPDS), 94 to 106 (RAAE…DYVP), 114 to 153 (DRGT…EELR), and 190 to 200 (GQKDLEDAPFV). The segment at 1 to 200 (MEKFYKENEG…QKDLEDAPFV (200 aa)) is disordered.

This sequence belongs to the TFS-II family. TFA subfamily.

It localises to the nucleus. Its function is as follows. May be involved in transcriptional regulation. The sequence is that of Transcription elongation factor A protein-like 5 (Tceal5) from Mus musculus (Mouse).